The primary structure comprises 304 residues: ATP synthase gamma chain (304 aa).

This sequence belongs to the ATPase gamma chain family. As to quaternary structure, F-type ATPases have 2 components, CF(1) - the catalytic core - and CF(0) - the membrane proton channel. CF(1) has five subunits: alpha(3), beta(3), gamma(1), delta(1), epsilon(1). CF(0) has three main subunits: a, b and c.

It is found in the cell membrane. Produces ATP from ADP in the presence of a proton gradient across the membrane. The gamma chain is believed to be important in regulating ATPase activity and the flow of protons through the CF(0) complex. This Thermobifida fusca (strain YX) protein is ATP synthase gamma chain.